A 240-amino-acid chain; its full sequence is ATP-dependent dethiobiotin synthetase BioD (240 aa).

Position 13-18 (13-18) interacts with ATP; it reads EVGKTV. Thr17 is a binding site for Mg(2+). Lys38 is an active-site residue. Ser42 is a binding site for substrate. Residues Asp55, 116–119, 176–177, and 205–207 each bind ATP; these read EGAG, ND, and PWL. 2 residues coordinate Mg(2+): Asp55 and Glu116.

It belongs to the dethiobiotin synthetase family. Homodimer. It depends on Mg(2+) as a cofactor.

Its subcellular location is the cytoplasm. It carries out the reaction (7R,8S)-7,8-diammoniononanoate + CO2 + ATP = (4R,5S)-dethiobiotin + ADP + phosphate + 3 H(+). The protein operates within cofactor biosynthesis; biotin biosynthesis; biotin from 7,8-diaminononanoate: step 1/2. Its function is as follows. Catalyzes a mechanistically unusual reaction, the ATP-dependent insertion of CO2 between the N7 and N8 nitrogen atoms of 7,8-diaminopelargonic acid (DAPA, also called 7,8-diammoniononanoate) to form a ureido ring. The protein is ATP-dependent dethiobiotin synthetase BioD of Pseudescherichia vulneris (Escherichia vulneris).